A 334-amino-acid polypeptide reads, in one-letter code: Heat shock factor 2-binding protein (334 aa).

Positions 14–51 (MGTKEEFVKVRKKDLERLTTEVMQIRDFLPRILNGEVL) are interaction with BRME1. Positions 49-122 (EVLESFQKLK…LLQQAEYCTE (74 aa)) form a coiled coil. The interaction with BRCA2 stretch occupies residues 83–334 (ARLETVQADN…EDLRTLEHNV (252 aa)).

In terms of assembly, associates with HSF2. The interaction seems to occur between the trimerization domain of HSF2 and the N-terminal hydrophilic region of HSF2BP. Interacts (via C-terminus) with BNC1. Interacts (via N-terminus) with BRCA2 and BRME1; the interactions are direct and allow the formation of a ternary complex. The complex BRME1:HSF2BP:BRCA2 interacts with SPATA22, MEIOB and RAD51. Post-translationally, sumoylated by UBE2I in response to MEKK1-mediated stimuli. In terms of tissue distribution, testis specific. Overexpressed in some tumors.

It is found in the cytoplasm. The protein localises to the chromosome. Meiotic recombination factor component of recombination bridges involved in meiotic double-strand break repair. Modulates the localization of recombinases DMC1:RAD51 to meiotic double-strand break (DSB) sites through the interaction with BRCA2 and its recruitment during meiotic recombination. Indispensable for the DSB repair, homologous synapsis, and crossover formation that are needed for progression past metaphase I, is essential for spermatogenesis and male fertility. Required for proper recombinase recruitment in female meiosis. Inhibits BNC1 transcriptional activity during spermatogenesis, probably by sequestering it in the cytoplasm. May be involved in modulating HSF2 activation in testis. This is Heat shock factor 2-binding protein from Homo sapiens (Human).